Reading from the N-terminus, the 99-residue chain is Integration host factor subunit alpha (99 aa).

It belongs to the bacterial histone-like protein family. In terms of assembly, heterodimer of an alpha and a beta chain.

Its function is as follows. This protein is one of the two subunits of integration host factor, a specific DNA-binding protein that functions in genetic recombination as well as in transcriptional and translational control. The protein is Integration host factor subunit alpha (ihfA) of Xylella fastidiosa (strain 9a5c).